The chain runs to 622 residues: Pesticidal crystal protein Cry2Ac (622 aa).

Belongs to the delta endotoxin family.

In terms of biological role, promotes colloidosmotic lysis by binding to the midgut epithelial cells of lepidopteran larvae. Has low activity on dipteran larvae. This chain is Pesticidal crystal protein Cry2Ac (cry2Ac), found in Bacillus thuringiensis.